Here is a 145-residue protein sequence, read N- to C-terminus: 3-hydroxyacyl-[acyl-carrier-protein] dehydratase FabZ (145 aa).

His48 is a catalytic residue.

The protein belongs to the thioester dehydratase family. FabZ subfamily.

The protein resides in the cytoplasm. It carries out the reaction a (3R)-hydroxyacyl-[ACP] = a (2E)-enoyl-[ACP] + H2O. Functionally, involved in unsaturated fatty acids biosynthesis. Catalyzes the dehydration of short chain beta-hydroxyacyl-ACPs and long chain saturated and unsaturated beta-hydroxyacyl-ACPs. In Cellvibrio japonicus (strain Ueda107) (Pseudomonas fluorescens subsp. cellulosa), this protein is 3-hydroxyacyl-[acyl-carrier-protein] dehydratase FabZ.